A 652-amino-acid chain; its full sequence is Inactive leucine-rich repeat receptor-like serine/threonine-protein kinase At1g60630 (652 aa).

A signal peptide spans 1–23 (MISSSSCMFFLVFAFFLISPVRS). Residues 24-256 (SDVEALLSLK…SRTKLIGIIS (233 aa)) are Extracellular-facing. 6 LRR repeats span residues 64-84 (SKLV…SLNQ), 85-108 (LDQL…LSGL), 109-132 (VNLK…LTSL), 134-156 (RLKT…LLRL), 158-178 (RLYT…PLNQ), and 179-203 (ATLR…ALNR). 3 N-linked (GlcNAc...) asparagine glycosylation sites follow: Asn72, Asn104, and Asn120. N-linked (GlcNAc...) asparagine glycosylation is found at Asn185, Asn205, and Asn225. A helical transmembrane segment spans residues 257–277 (GSICGGILILLLTFLLICLLW). The Cytoplasmic segment spans residues 278–652 (RRKRSKSKRE…SLPREDHMSI (375 aa)). The tract at residues 286–321 (REERRSKRVAESKEAKTAETEEGTSDQKNKRFSWEK) is disordered. The region spanning 350–624 (KASAETLGRG…VKDARAEAAL (275 aa)) is the Protein kinase domain. Ser352 bears the Phosphoserine mark. Residues 356 to 364 (LGRGTLGST) and Lys378 each bind ATP. A phosphoserine mark is found at Ser430 and Ser433. Thr509 bears the Phosphothreonine mark. Residues 630-652 (SDHSPGRWSDTIQSLPREDHMSI) are disordered.

Belongs to the protein kinase superfamily. Ser/Thr protein kinase family.

The protein localises to the cell membrane. The sequence is that of Inactive leucine-rich repeat receptor-like serine/threonine-protein kinase At1g60630 from Arabidopsis thaliana (Mouse-ear cress).